Here is a 553-residue protein sequence, read N- to C-terminus: ATP synthase F(1) complex subunit alpha, mitochondrial (553 aa).

The N-terminal 43 residues, 1–43 (MLSVRIAAAVARALPRRAGLVSKNALGSSFVGTRNLHASNTRL), are a transit peptide targeting the mitochondrion. 2 positions are modified to phosphoserine: Ser53 and Ser65. Residue Ser76 is modified to Phosphoserine; alternate. An O-linked (GlcNAc) serine; alternate glycan is attached at Ser76. Ser106 is modified (phosphoserine). 3 positions are modified to N6-acetyllysine: Lys123, Lys126, and Lys132. A Phosphothreonine modification is found at Thr134. Lys161 carries the N6-acetyllysine; alternate modification. Lys161 bears the N6-succinyllysine; alternate mark. Ser166 carries the phosphoserine modification. At Lys167 the chain carries N6-acetyllysine; alternate. At Lys167 the chain carries N6-succinyllysine; alternate. Residue Ser184 is modified to Phosphoserine. Residue Arg204 is modified to Omega-N-methylarginine. 5 residues coordinate ATP: Gln215, Gly217, Lys218, Thr219, and Ser220. Thr219 is a Mg(2+) binding site. N6-acetyllysine; alternate occurs at positions 230 and 239. N6-succinyllysine; alternate occurs at positions 230 and 239. Lys240 carries the N6-acetyllysine modification. Lys261 and Lys305 each carry N6-acetyllysine; alternate. N6-succinyllysine; alternate is present on residues Lys261 and Lys305. Asp312 lines the Mg(2+) pocket. Lys427 bears the N6-acetyllysine; alternate mark. Lys427 bears the N6-succinyllysine; alternate mark. Residue Lys434 is modified to N6-acetyllysine. ATP contacts are provided by Gln473 and Gln475. Lys498, Lys506, Lys531, and Lys539 each carry N6-acetyllysine; alternate. 4 positions are modified to N6-succinyllysine; alternate: Lys498, Lys506, Lys531, and Lys539. Lys541 bears the N6-acetyllysine mark.

Belongs to the ATPase alpha/beta chains family. In terms of assembly, homotrimer. Component of the ATP synthase complex composed at least of ATP5F1A/subunit alpha, ATP5F1B/subunit beta, ATP5MC1/subunit c (homooctomer), MT-ATP6/subunit a, MT-ATP8/subunit 8, ATP5ME/subunit e, ATP5MF/subunit f, ATP5MG/subunit g, ATP5MK/subunit k, ATP5MJ/subunit j, ATP5F1C/subunit gamma, ATP5F1D/subunit delta, ATP5F1E/subunit epsilon, ATP5PF/subunit F6, ATP5PB/subunit b, ATP5PD/subunit d, ATP5PO/subunit OSCP. ATP synthase complex consists of a soluble F(1) head domain (subunits alpha(3) and beta(3)) - the catalytic core - and a membrane F(0) domain - the membrane proton channel (subunits c, a, 8, e, f, g, k and j). These two domains are linked by a central stalk (subunits gamma, delta, and epsilon) rotating inside the F1 region and a stationary peripheral stalk (subunits F6, b, d, and OSCP). Interacts with ATPAF2. Interacts with HRG; the interaction occurs on the surface of T-cells and alters the cell morphology when associated with concanavalin (in vitro). Interacts with PLG (angiostatin peptide); the interaction inhibits most of the angiogenic properties of angiostatin. Interacts with BLOC1S1. Interacts with BCL2L1 isoform BCL-X(L); the interaction mediates the association of BCL2L1 isoform BCL-X(L) with the mitochondrial membrane F(1)F(0) ATP synthase and enhances neurons metabolic efficiency. Interacts with CLN5 and PPT1. Interacts with S100A1; this interaction increases F1-ATPase activity. Interacts with ABCB7; this interaction allows the regulation of cellular iron homeostasis and cellular reactive oxygen species (ROS) levels in cardiomyocytes. Post-translationally, acetylated on lysine residues. BLOC1S1 is required for acetylation. As to expression, expressed in flagella of epididymal sperm.

It localises to the mitochondrion. It is found in the mitochondrion inner membrane. The protein localises to the cell membrane. Its function is as follows. Subunit alpha, of the mitochondrial membrane ATP synthase complex (F(1)F(0) ATP synthase or Complex V) that produces ATP from ADP in the presence of a proton gradient across the membrane which is generated by electron transport complexes of the respiratory chain. ATP synthase complex consist of a soluble F(1) head domain - the catalytic core - and a membrane F(1) domain - the membrane proton channel. These two domains are linked by a central stalk rotating inside the F(1) region and a stationary peripheral stalk. During catalysis, ATP synthesis in the catalytic domain of F(1) is coupled via a rotary mechanism of the central stalk subunits to proton translocation. In vivo, can only synthesize ATP although its ATP hydrolase activity can be activated artificially in vitro. With the catalytic subunit beta (ATP5F1B), forms the catalytic core in the F(1) domain. Subunit alpha does not bear the catalytic high-affinity ATP-binding sites. This chain is ATP synthase F(1) complex subunit alpha, mitochondrial, found in Rattus norvegicus (Rat).